A 424-amino-acid chain; its full sequence is uncharacterized protein (424 aa).

This sequence belongs to the serpin family.

This is an uncharacterized protein from Methanosarcina acetivorans (strain ATCC 35395 / DSM 2834 / JCM 12185 / C2A).